Reading from the N-terminus, the 308-residue chain is Olfactory receptor 8D1 (308 aa).

Residues 1–25 (MTMENYSMAAQFVLDGLTQQAELQL) are Extracellular-facing. N-linked (GlcNAc...) asparagine glycosylation is present at Asn-5. Residues 26–46 (PLFLLFLGIYVVTVVGNLGMI) traverse the membrane as a helical segment. Over 47–54 (LLIAVSPL) the chain is Cytoplasmic. Residues 55–75 (LHTPMYYFLSSLSFVDFCYSS) traverse the membrane as a helical segment. Topologically, residues 76–99 (VITPKMLVNFLGKKNTILYSECMV) are extracellular. Cysteines 97 and 189 form a disulfide. The helical transmembrane segment at 100-120 (QLFFFVVFVVAEGYLLTAMAY) threads the bilayer. Residues 121–139 (DRYVAICSPLLYNAIMSSW) lie on the Cytoplasmic side of the membrane. A helical transmembrane segment spans residues 140-160 (VCSLLVLAAFFLGFLSALTHT). Over 161-197 (SAMMKLSFCKSHIINHYFCDVLPLLNLSCSNTHLNEL) the chain is Extracellular. Asn-186 carries an N-linked (GlcNAc...) asparagine glycan. The chain crosses the membrane as a helical span at residues 198–217 (LLFIIAGFNTLVPTLAVAVS). The Cytoplasmic segment spans residues 218-237 (YAFILYSILHIRSSEGRSKA). Residues 238 to 258 (FGTCSSHLMAVVIFFGSITFM) form a helical membrane-spanning segment. The Extracellular portion of the chain corresponds to 259 to 271 (YFKPPSSNSLDQE). The helical transmembrane segment at 272–292 (KVSSVFYTTVIPMLNPLIYSL) threads the bilayer. Residues 293 to 308 (RNKDVKKALRKVLVGK) lie on the Cytoplasmic side of the membrane.

Belongs to the G-protein coupled receptor 1 family. Expressed in the tongue.

It localises to the cell membrane. Odorant receptor (Potential). May be involved in taste perception. The chain is Olfactory receptor 8D1 (OR8D1) from Homo sapiens (Human).